We begin with the raw amino-acid sequence, 129 residues long: Small ribosomal subunit protein uS11 (129 aa).

The protein belongs to the universal ribosomal protein uS11 family. In terms of assembly, part of the 30S ribosomal subunit. Interacts with proteins S7 and S18. Binds to IF-3.

Its function is as follows. Located on the platform of the 30S subunit, it bridges several disparate RNA helices of the 16S rRNA. Forms part of the Shine-Dalgarno cleft in the 70S ribosome. This is Small ribosomal subunit protein uS11 from Limosilactobacillus reuteri (strain DSM 20016) (Lactobacillus reuteri).